A 275-amino-acid chain; its full sequence is Mitochondrial fission factor homolog A (275 aa).

Residues 1–255 lie on the Cytoplasmic side of the membrane; it reads MAEVNRIHYE…ENKERAKREM (255 aa). Residues 100–171 are disordered; sequence DFLEPEPAAN…PLISPEDSQN (72 aa). Residues 114–130 are compositionally biased toward basic and acidic residues; it reads PREEMKSHFRSRREQCR. The span at 131 to 142 shows a compositional bias: polar residues; that stretch reads SENSTMRRNGQI. Residues 223–253 are a coiled coil; the sequence is LTDAASLRRQIIKLNRRLQLLEHENKERAKR. A helical; Anchor for type IV membrane protein membrane pass occupies residues 256–273; the sequence is VMYSLTVAFWLVNSWIWL. Residues 274 to 275 are Extracellular-facing; the sequence is RR.

Belongs to the Tango11 family.

The protein localises to the mitochondrion outer membrane. Its subcellular location is the peroxisome. In terms of biological role, plays a role in mitochondrial and peroxisomal fission. Promotes the recruitment and association of the fission mediator dynamin-related protein 1 (DNM1L) to the mitochondrial surface. The polypeptide is Mitochondrial fission factor homolog A (Danio rerio (Zebrafish)).